We begin with the raw amino-acid sequence, 477 residues long: Solute carrier family 2, facilitated glucose transporter member 8 (477 aa).

Topologically, residues 1 to 25 (MSPEDPQETQPLLRPPEARTPRGRR) are cytoplasmic. The Dileucine internalization motif motif lies at 12-13 (LL). Residues 26-46 (VFLASFAAALGPLSFGFALGY) traverse the membrane as a helical segment. Residues 47–70 (SSPAIPSLRRTAPPALRLGDNAAS) lie on the Extracellular side of the membrane. Residues 71 to 91 (WFGAVVTLGAAAGGILGGWLL) traverse the membrane as a helical segment. Over 92-96 (DRAGR) the chain is Cytoplasmic. Residues 97–117 (KLSLLLCTVPFVTGFAVITAA) traverse the membrane as a helical segment. Residues 118–127 (RDVWMLLGGR) are Extracellular-facing. A helical membrane pass occupies residues 128 to 148 (LLTGLACGVASLVAPVYISEI). Residues 149–156 (AYPAVRGL) are Cytoplasmic-facing. A helical transmembrane segment spans residues 157-177 (LGSCVQLMVVTGILLAYVAGW). Glutamine 162 contacts D-glucose. Residues 178–182 (VLEWR) are Extracellular-facing. A helical membrane pass occupies residues 183–203 (WLAVLGCVPPTLMLLLMCYMP). Topologically, residues 204 to 257 (ETPRFLLTQHQYQEAMAALRFLWGSEEGWEEPPVGAEHQGFQLALLRRPGIYKP) are cytoplasmic. The helical transmembrane segment at 258–278 (LIIGISLMVFQQLSGVNAIMF) threads the bilayer. Residues 268–269 (QQ) and asparagine 274 contribute to the D-glucose site. Over 279-293 (YANSIFEEAKFKDSS) the chain is Extracellular. A helical membrane pass occupies residues 294–314 (LASVTVGIIQVLFTAVAALIM). At 315-320 (DRAGRR) the chain is on the cytoplasmic side. The chain crosses the membrane as a helical span at residues 321–341 (LLLALSGVIMVFSMSAFGTYF). The Extracellular portion of the chain corresponds to 342-367 (KLTQSLPSNSSHVGLVPIAAEPVDVQ). Residue asparagine 350 is glycosylated (N-linked (GlcNAc...) asparagine). The helical transmembrane segment at 368-388 (VGLAWLAVGSMCLFIAGFAVG) threads the bilayer. The Cytoplasmic portion of the chain corresponds to 389–404 (WGPIPWLLMSEIFPLH). Tryptophan 394 is a D-glucose binding site. The helical transmembrane segment at 405 to 425 (VKGVATGICVLTNWFMAFLVT) threads the bilayer. The Extracellular segment spans residues 426-438 (KEFSSVMEMLRPY). A helical membrane pass occupies residues 439–459 (GAFWLTAAFCALSVLFTLTVV). The Cytoplasmic portion of the chain corresponds to 460-477 (PETKGRTLEQVTAHFEGR).

This sequence belongs to the major facilitator superfamily. Sugar transporter (TC 2.A.1.1) family. Glucose transporter subfamily. As to quaternary structure, interacts with AP2B1. Also able to mediate the transport of dehydroascorbate. In terms of tissue distribution, highest level of expression in placenta and testis. Highly expressed in adult and pubertal testis, but not prepubertal testis. Lower levels of expression in brain, liver, heart, kidney, fat and skeletal muscle.

Its subcellular location is the cell membrane. The protein localises to the cytoplasmic vesicle membrane. It carries out the reaction D-glucose(out) = D-glucose(in). The enzyme catalyses D-fructose(out) = D-fructose(in). The catalysed reaction is L-dehydroascorbate(out) = L-dehydroascorbate(in). It catalyses the reaction alpha,alpha-trehalose(in) = alpha,alpha-trehalose(out). With respect to regulation, inhibited by cytochalasin B. Functionally, insulin-regulated facilitative hexose transporter that mediates the transport of glucose and fructose. Facilitates hepatic influx of dietary trehalose, which in turn inhibits glucose and fructose influx triggering a starvation signal and hepatic autophagy through activation of AMPK and ULK1. Also able to mediate the transport of dehydroascorbate. In Mus musculus (Mouse), this protein is Solute carrier family 2, facilitated glucose transporter member 8.